The sequence spans 325 residues: Methionyl-tRNA formyltransferase (325 aa).

A (6S)-5,6,7,8-tetrahydrofolate-binding site is contributed by 113 to 116 (SLLP).

This sequence belongs to the Fmt family.

The enzyme catalyses L-methionyl-tRNA(fMet) + (6R)-10-formyltetrahydrofolate = N-formyl-L-methionyl-tRNA(fMet) + (6S)-5,6,7,8-tetrahydrofolate + H(+). Attaches a formyl group to the free amino group of methionyl-tRNA(fMet). The formyl group appears to play a dual role in the initiator identity of N-formylmethionyl-tRNA by promoting its recognition by IF2 and preventing the misappropriation of this tRNA by the elongation apparatus. In Chromohalobacter salexigens (strain ATCC BAA-138 / DSM 3043 / CIP 106854 / NCIMB 13768 / 1H11), this protein is Methionyl-tRNA formyltransferase.